A 95-amino-acid chain; its full sequence is Feather keratin B-4 (95 aa).

At Ser-1 the chain carries N-acetylserine.

Belongs to the avian keratin family. The avian keratins (F-ker, S-ker, C-ker and B-ker) are a complex mixture of very similar polypeptides.

The sequence is that of Feather keratin B-4 from Anas platyrhynchos (Mallard).